The sequence spans 365 residues: 3-isopropylmalate dehydrogenase (365 aa).

80 to 91 (GPKWGTGSVRPE) contributes to the NAD(+) binding site. Residues Arg98, Arg108, Arg137, and Asp226 each coordinate substrate. The Mg(2+) site is built by Asp226, Asp251, and Asp255. 290–301 (GSAPDLPKGKVN) serves as a coordination point for NAD(+).

This sequence belongs to the isocitrate and isopropylmalate dehydrogenases family. Homodimer. The cofactor is Mg(2+). Mn(2+) is required as a cofactor.

The protein resides in the cytoplasm. The enzyme catalyses (2R,3S)-3-isopropylmalate + NAD(+) = 4-methyl-2-oxopentanoate + CO2 + NADH. Its pathway is amino-acid biosynthesis; L-leucine biosynthesis; L-leucine from 3-methyl-2-oxobutanoate: step 3/4. Functionally, catalyzes the oxidation of 3-carboxy-2-hydroxy-4-methylpentanoate (3-isopropylmalate) to 3-carboxy-4-methyl-2-oxopentanoate. The product decarboxylates to 4-methyl-2 oxopentanoate. This Maudiozyma exigua (Yeast) protein is 3-isopropylmalate dehydrogenase (LEU2).